The sequence spans 80 residues: U-Asilidin(1)-Dg12 (80 aa).

Residues 1–24 form the signal peptide; that stretch reads MARLLVVSVGVFLAVIMLSSETMS. The propeptide occupies 25-46; sequence LPAGENLPALTLFEAQNQLIGL. Disulfide bonds link Cys53/Cys67, Cys60/Cys71, and Cys66/Cys78.

It belongs to the asilidin-1 family. Expressed by the venom gland.

Its subcellular location is the secreted. Its function is as follows. Neurotoxin that may modulate ions channels (other than those tested). In vivo, induces neurotoxic effects when injected into insects (tested on L.cuprina and A.domesticus). The sequence is that of U-Asilidin(1)-Dg12 from Dolopus genitalis (Giant Australian assassin fly).